Consider the following 438-residue polypeptide: Enolase (438 aa).

Residues His159 and Glu168 each contribute to the substrate site. Catalysis depends on Glu211, which acts as the Proton donor. Mg(2+) is bound by residues Asp246, Glu297, and Asp322. Substrate-binding residues include Glu297 and Asp322. Lys347 acts as the Proton acceptor in catalysis. Substrate-binding positions include 374–377 (SHRS) and Lys398.

Belongs to the enolase family. As to quaternary structure, homodimer. The cofactor is Mg(2+).

It localises to the cytoplasm. The enzyme catalyses (2R)-2-phosphoglycerate = phosphoenolpyruvate + H2O. It functions in the pathway carbohydrate degradation; glycolysis; pyruvate from D-glyceraldehyde 3-phosphate: step 4/5. The sequence is that of Enolase (enoA) from Penicillium citrinum.